A 213-amino-acid chain; its full sequence is Protein-L-isoaspartate O-methyltransferase (213 aa).

S64 is a catalytic residue.

It belongs to the methyltransferase superfamily. L-isoaspartyl/D-aspartyl protein methyltransferase family.

The protein resides in the cytoplasm. The enzyme catalyses [protein]-L-isoaspartate + S-adenosyl-L-methionine = [protein]-L-isoaspartate alpha-methyl ester + S-adenosyl-L-homocysteine. In terms of biological role, catalyzes the methyl esterification of L-isoaspartyl residues in peptides and proteins that result from spontaneous decomposition of normal L-aspartyl and L-asparaginyl residues. It plays a role in the repair and/or degradation of damaged proteins. The protein is Protein-L-isoaspartate O-methyltransferase of Flavobacterium johnsoniae (strain ATCC 17061 / DSM 2064 / JCM 8514 / BCRC 14874 / CCUG 350202 / NBRC 14942 / NCIMB 11054 / UW101) (Cytophaga johnsonae).